Consider the following 478-residue polypeptide: 3-isopropylmalate dehydratase large subunit (478 aa).

Residues cysteine 359, cysteine 417, and cysteine 420 each contribute to the [4Fe-4S] cluster site.

Belongs to the aconitase/IPM isomerase family. LeuC type 1 subfamily. Heterodimer of LeuC and LeuD. The cofactor is [4Fe-4S] cluster.

It carries out the reaction (2R,3S)-3-isopropylmalate = (2S)-2-isopropylmalate. The protein operates within amino-acid biosynthesis; L-leucine biosynthesis; L-leucine from 3-methyl-2-oxobutanoate: step 2/4. In terms of biological role, catalyzes the isomerization between 2-isopropylmalate and 3-isopropylmalate, via the formation of 2-isopropylmaleate. The polypeptide is 3-isopropylmalate dehydratase large subunit (Anaeromyxobacter sp. (strain Fw109-5)).